A 309-amino-acid chain; its full sequence is Oxygen-dependent coproporphyrinogen-III oxidase (309 aa).

S100 lines the substrate pocket. The a divalent metal cation site is built by H104 and H114. H114 (proton donor) is an active-site residue. A substrate-binding site is contributed by 116–118; sequence NVR. 2 residues coordinate a divalent metal cation: H153 and H183. An important for dimerization region spans residues 248 to 283; that stretch reads YAEFNLVYDRGTLFGLQSGGRTESILMSLPPIVHWE. 266–268 is a substrate binding site; it reads GGR.

It belongs to the aerobic coproporphyrinogen-III oxidase family. As to quaternary structure, homodimer. It depends on a divalent metal cation as a cofactor.

It localises to the cytoplasm. The catalysed reaction is coproporphyrinogen III + O2 + 2 H(+) = protoporphyrinogen IX + 2 CO2 + 2 H2O. It functions in the pathway porphyrin-containing compound metabolism; protoporphyrin-IX biosynthesis; protoporphyrinogen-IX from coproporphyrinogen-III (O2 route): step 1/1. Its function is as follows. Involved in the heme biosynthesis. Catalyzes the aerobic oxidative decarboxylation of propionate groups of rings A and B of coproporphyrinogen-III to yield the vinyl groups in protoporphyrinogen-IX. This chain is Oxygen-dependent coproporphyrinogen-III oxidase, found in Legionella pneumophila (strain Lens).